The primary structure comprises 279 residues: uncharacterized protein (279 aa).

An HTH rpiR-type domain is found at 1–77 (MGILEQLENP…VTLAKEISNK (77 aa)). Positions 37–56 (ISIIAKESGVGEATITRFTK) form a DNA-binding region, H-T-H motif. The 141-residue stretch at 123 to 263 (CRDLIMNAKR…YTEVIKEMFS (141 aa)) folds into the SIS domain.

This is an uncharacterized protein from Clostridium perfringens (strain 13 / Type A).